Consider the following 928-residue polypeptide: Chitin synthase 2 (928 aa).

Disordered regions lie at residues 1–45 and 110–179; these read MAYN…EAYA and AYYT…SPAP. Positions 17 to 28 are enriched in polar residues; the sequence is PSAQPQYDSRSP. A compositionally biased stretch (basic and acidic residues) spans 130–140; the sequence is PSHDEPYRPDT. 9 helical membrane passes run 472–492, 570–589, 613–633, 644–664, 678–698, 723–743, 753–773, 854–874, and 893–913; these read SAFG…YVAL, WLNG…YQLW, LFAW…TASL, TVLG…CFIL, MMMV…SIFL, FFGL…ASFL, CFLQ…IYAF, VTAW…IAGF, and VILW…CWFL.

This sequence belongs to the chitin synthase family. Class I subfamily.

It localises to the cell membrane. The catalysed reaction is [(1-&gt;4)-N-acetyl-beta-D-glucosaminyl](n) + UDP-N-acetyl-alpha-D-glucosamine = [(1-&gt;4)-N-acetyl-beta-D-glucosaminyl](n+1) + UDP + H(+). In terms of biological role, polymerizes chitin, a structural polymer of the cell wall and septum, by transferring the sugar moiety of UDP-GlcNAc to the non-reducing end of the growing chitin polymer. CHS2 plays a synergistic role to CHS1 in normal yeast cell reproductive growth, even if this role is less predominant than for CHS1. With CHS3, plays an important role in virulence. This chain is Chitin synthase 2, found in Exophiala dermatitidis (Black yeast-like fungus).